We begin with the raw amino-acid sequence, 228 residues long: MKKFFLASSILSADFARLGEDTKKAIDAGSDWIHFDVMDNHYVPNLTMGPMILKALRNYNITVPIDVHLMVKPVDNLIPQFAEAGADFITFHPESTDHIDRTLNLIKECGCKAGLALNPATSLNFLDYVMEKLDLILLMSVNPGFGNQSFLPTSFNKLREVRKKIELNSSNILLEVDGGVKLENISEVAFSGANVFVIGSGIFGYTDYNVIIKKIRKKLKNVYSTSIH.

Residue Ser9 participates in substrate binding. Residues His34, Asp36, His68, and Asp177 each coordinate a divalent metal cation. Asp36 functions as the Proton acceptor in the catalytic mechanism. Residues His68, 177 to 179, and 199 to 200 each bind substrate; these read DGG and GS. The active-site Proton donor is Asp177.

This sequence belongs to the ribulose-phosphate 3-epimerase family. A divalent metal cation is required as a cofactor.

It carries out the reaction D-ribulose 5-phosphate = D-xylulose 5-phosphate. It functions in the pathway carbohydrate degradation. Its function is as follows. Catalyzes the reversible epimerization of D-ribulose 5-phosphate to D-xylulose 5-phosphate. This chain is Ribulose-phosphate 3-epimerase, found in Buchnera aphidicola subsp. Schizaphis graminum (strain Sg).